The sequence spans 257 residues: Small ribosomal subunit protein eS1 (257 aa).

The tract at residues 237-257 (GADGEKVDRPDDYEPPVQQEV) is disordered. The span at 239–248 (DGEKVDRPDD) shows a compositional bias: basic and acidic residues.

This sequence belongs to the eukaryotic ribosomal protein eS1 family. In terms of assembly, component of the small ribosomal subunit. Mature ribosomes consist of a small (40S) and a large (60S) subunit. The 40S subunit contains about 33 different proteins and 1 molecule of RNA (18S). The 60S subunit contains about 49 different proteins and 3 molecules of RNA (28S, 5.8S and 5S).

It localises to the cytoplasm. The chain is Small ribosomal subunit protein eS1 from Caenorhabditis elegans.